The chain runs to 521 residues: 7-deoxyloganic acid hydroxylase (521 aa).

Residues 8–28 (IIFLVFVSLTLYWVYRILDWV) form a helical membrane-spanning segment. Residues N107 and N311 are each glycosylated (N-linked (GlcNAc...) asparagine). C469 is a heme binding site.

This sequence belongs to the cytochrome P450 family. In terms of tissue distribution, mostly present in actively growing aerial organs, including leaves, flower buds and stems, and, to a lower extent, in mature leaves, roots and opened flowers. Expressed in the leaf internal phloem-associated parenchyma (IPAP) inside the mesophyll.

The protein resides in the endoplasmic reticulum membrane. It catalyses the reaction 7-deoxyloganate + reduced [NADPH--hemoprotein reductase] + O2 = loganate + oxidized [NADPH--hemoprotein reductase] + H2O + H(+). Its pathway is alkaloid biosynthesis. In terms of biological role, component of the seco-iridoid and derivatives monoterpenoid indole alkaloids (MIAs, e.g. vincristine, quinine, and strychnine) biosynthesis pathway. Catalyzes the conversion of 7-deoxyloganic acid into loganic acid. Not active on 7-deoxyloganetic acid. This chain is 7-deoxyloganic acid hydroxylase, found in Catharanthus roseus (Madagascar periwinkle).